Here is a 503-residue protein sequence, read N- to C-terminus: Cytochrome P450 3A12 (503 aa).

A heme-binding site is contributed by Cys-442.

This sequence belongs to the cytochrome P450 family. It depends on heme as a cofactor.

The protein resides in the endoplasmic reticulum membrane. It is found in the microsome membrane. The catalysed reaction is an organic molecule + reduced [NADPH--hemoprotein reductase] + O2 = an alcohol + oxidized [NADPH--hemoprotein reductase] + H2O + H(+). Its function is as follows. Cytochromes P450 are a group of heme-thiolate monooxygenases. In liver microsomes, this enzyme is involved in an NADPH-dependent electron transport pathway. It oxidizes a variety of structurally unrelated compounds, including steroids, fatty acids, and xenobiotics. This Canis lupus familiaris (Dog) protein is Cytochrome P450 3A12 (CYP3A12).